Consider the following 170-residue polypeptide: Lipoprotein signal peptidase (170 aa).

3 helical membrane-spanning segments follow: residues 12 to 32, 67 to 87, and 93 to 113; these read WYWV…WVLA, WQRW…TVWL, and SLWK…GNLI. Residues D123 and D141 contribute to the active site. The chain crosses the membrane as a helical span at residues 137-157; the sequence is FNIADSAIFIGAVLIIWDSFF.

Belongs to the peptidase A8 family.

It is found in the cell inner membrane. The catalysed reaction is Release of signal peptides from bacterial membrane prolipoproteins. Hydrolyzes -Xaa-Yaa-Zaa-|-(S,diacylglyceryl)Cys-, in which Xaa is hydrophobic (preferably Leu), and Yaa (Ala or Ser) and Zaa (Gly or Ala) have small, neutral side chains.. Its pathway is protein modification; lipoprotein biosynthesis (signal peptide cleavage). Functionally, this protein specifically catalyzes the removal of signal peptides from prolipoproteins. In Shewanella sp. (strain MR-4), this protein is Lipoprotein signal peptidase.